Consider the following 380-residue polypeptide: Cytochrome b (380 aa).

A run of 4 helical transmembrane segments spans residues 33-53, 77-98, 113-133, and 178-198; these read FGSL…FLAM, WLIR…YLHI, WNVG…GYVL, and FFAF…IHLI. The heme b site is built by His83 and His97. Heme b-binding residues include His182 and His196. His201 contacts a ubiquinone. A run of 4 helical transmembrane segments spans residues 226–246, 288–308, 320–340, and 347–367; these read YKDL…ALFS, LGGV…PILH, FSQF…WIGG, and FVII…VMIP.

Belongs to the cytochrome b family. The cytochrome bc1 complex contains 3 respiratory subunits (MT-CYB, CYC1 and UQCRFS1), 2 core proteins (UQCRC1 and UQCRC2) and probably 6 low-molecular weight proteins. The cofactor is heme b.

The protein resides in the mitochondrion inner membrane. Component of the ubiquinol-cytochrome c reductase complex (complex III or cytochrome b-c1 complex) that is part of the mitochondrial respiratory chain. The b-c1 complex mediates electron transfer from ubiquinol to cytochrome c. Contributes to the generation of a proton gradient across the mitochondrial membrane that is then used for ATP synthesis. The polypeptide is Cytochrome b (mt-cyb) (Paralichthys olivaceus (Bastard halibut)).